The chain runs to 243 residues: Proteasome subunit beta (243 aa).

Composition is skewed to basic and acidic residues over residues 1-11 and 33-47; these read MRTPTHDEFSG and NADR…KETK. A propeptide spans 1–49 (removed in mature form; by autocatalysis); it reads MRTPTHDEFSGRLDSLNGDRSNVFGPELGEFSNADRRADELGDKETKTG. Residues 1 to 50 form a disordered region; it reads MRTPTHDEFSGRLDSLNGDRSNVFGPELGEFSNADRRADELGDKETKTGT. Residue Thr50 is the Nucleophile of the active site. Residue Ser129 is modified to Phosphoserine.

It belongs to the peptidase T1B family. The 20S proteasome core is composed of 14 alpha and 14 beta subunits that assemble into four stacked heptameric rings, resulting in a barrel-shaped structure. The two inner rings, each composed of seven catalytic beta subunits, are sandwiched by two outer rings, each composed of seven alpha subunits. H.volcanii produces at least 2 types of 20S proteasomes: an alpha1-beta proteasome and a proteasome containing all three subunits (alpha1, alpha2, and beta) that appears to be asymmetrical with homo-oligomeric alpha1 and alpha2 rings positioned on separate ends. The catalytic chamber with the active sites is on the inside of the barrel. Has probably a gated structure, the ends of the cylinder being occluded by the N-termini of the alpha-subunits. Is likely capped at one or both ends by the proteasome regulatory ATPase, PAN.

It localises to the cytoplasm. It catalyses the reaction Cleavage of peptide bonds with very broad specificity.. With respect to regulation, the formation of the proteasomal ATPase PAN-20S proteasome complex, via the docking of the C-termini of PAN into the intersubunit pockets in the alpha-rings, triggers opening of the gate for substrate entry. Interconversion between the open-gate and close-gate conformations leads to a dynamic regulation of the 20S proteasome proteolysis activity. In vitro, the chymotrypsin-like activity of the alpha1-beta proteasome is potently inhibited by carbobenzoxyl-leucinyl-leucinyl-leucinal-H (MG132) and significantly by N-acetyl-leucinyl-leucinyl-norleucinal-H (calpain inhibitor I). Its function is as follows. Component of the proteasome core, a large protease complex with broad specificity involved in protein degradation. The H.volcanii alpha1-beta proteasome is able to cleave oligopeptides after Phe, Tyr and Trp, poorly after Glu but not after Arg. Thus, displays chymotrypsin-like activity, low caspase-like activity but no trypsin-like activity. The protein is Proteasome subunit beta of Haloferax volcanii (strain ATCC 29605 / DSM 3757 / JCM 8879 / NBRC 14742 / NCIMB 2012 / VKM B-1768 / DS2) (Halobacterium volcanii).